The sequence spans 129 residues: Large ribosomal subunit protein bL12c (129 aa).

It belongs to the bacterial ribosomal protein bL12 family. In terms of assembly, homodimer. Part of the ribosomal stalk of the 50S ribosomal subunit. Forms a multimeric L10(L12)X complex, where L10 forms an elongated spine to which 2 to 4 L12 dimers bind in a sequential fashion. Binds GTP-bound translation factors.

Its subcellular location is the plastid. It is found in the chloroplast. Forms part of the ribosomal stalk which helps the ribosome interact with GTP-bound translation factors. Is thus essential for accurate translation. The sequence is that of Large ribosomal subunit protein bL12c from Oltmannsiellopsis viridis (Marine flagellate).